We begin with the raw amino-acid sequence, 223 residues long: uncharacterized protein (223 aa).

The region spanning 11 to 71 (EATFESFIDA…YLLEKRQMKK (61 aa)) is the HTH tetR-type domain. The H-T-H motif DNA-binding region spans 34-53 (SVEDISRAAGYSKGAFYVHF).

This is an uncharacterized protein from Bacillus subtilis (strain 168).